Here is a 378-residue protein sequence, read N- to C-terminus: Signal peptide peptidase (378 aa).

Positions 1–27 (MDSAVSDPHNGSAEAGTPANGTTRPPS) are disordered. The Lumenal segment spans residues 1 to 31 (MDSAVSDPHNGSAEAGTPANGTTRPPSTPEG). N-linked (GlcNAc...) asparagine glycosylation is found at Asn10 and Asn20. The helical transmembrane segment at 32-52 (IALAYGSLLLMALLPIFFGAL) threads the bilayer. Over 53–77 (RSVRCARGKSSSDMPETITSRDAAR) the chain is Cytoplasmic. A helical transmembrane segment spans residues 78–98 (FPIIASCTLLGLYLFFKIFSQ). At 99–100 (EY) the chain is on the lumenal side. The helical transmembrane segment at 101–121 (INLLLSMYFFVLGILALSHTI) threads the bilayer. At 122 to 157 (SPFMNKFFPANFPNRQYQLLFTQGSGENKEEIINYE) the chain is on the cytoplasmic side. The chain crosses the membrane as a helical span at residues 158–178 (FDTKDLVCLGLSSVVGVWYLL). Over 179-181 (RKH) the chain is Lumenal. The helical transmembrane segment at 182-202 (WIANNLFGLAFSLNGVELLHL) threads the bilayer. Residues 203–209 (NNVSTGC) are Cytoplasmic-facing. The chain crosses the membrane as a helical span at residues 210-230 (ILLGGLFIYDIFWVFGTNVMV). Asp219 is a catalytic residue. Residues 231–256 (TVAKSFEAPIKLVFPQDLLEKGLEAD) lie on the Lumenal side of the membrane. A helical transmembrane segment spans residues 257–277 (NFAMLGLGDIVIPGIFIALLL). The active site involves Asp265. At 278–290 (RFDISLKKNTHTY) the chain is on the cytoplasmic side. A helical transmembrane segment spans residues 291-311 (FYTSFAAYIFGLGLTIFIMHI). The Lumenal segment spans residues 312–314 (FKH). Residues 315–335 (AQPALLYLVPACIGFPVLVAL) form a helical membrane-spanning segment. Positions 317–319 (PAL) match the PAL motif. The Cytoplasmic segment spans residues 336–378 (AKGEVAEMFSYEESNPKDPAAETESKEESTEASASKRLEKKEK). The disordered stretch occupies residues 346–378 (YEESNPKDPAAETESKEESTEASASKRLEKKEK). The span at 349–378 (SNPKDPAAETESKEESTEASASKRLEKKEK) shows a compositional bias: basic and acidic residues. Ser368 is subject to Phosphoserine.

The protein belongs to the peptidase A22B family. Monomer. Homodimer. Interacts with RNF139. Interacts with DERL1 and XBP1 isoform 1. As to expression, widely expressed with highest levels in liver and kidney. In the brain, expressed predominantly in hippocampus, amygdala, piriform cortex, choroid plexus and arcuate nucleus of the hypothalamic area. Isoform 1 is more strongly expressed than isoform 4 in most tissues except brain and skeletal muscle where isoform 4 is the dominant isoform and in testis where isoform 1 and isoform 4 are expressed at similar levels. In the brain, isoform 4 is not detected in the choroid plexus.

It is found in the endoplasmic reticulum membrane. It localises to the membrane. The protein resides in the cell membrane. Functionally, catalyzes intramembrane proteolysis of signal peptides that have been removed from precursors of secretory and membrane proteins, resulting in the release of the fragment from the ER membrane into the cytoplasm. Required to generate lymphocyte cell surface (HLA-E) epitopes derived from MHC class I signal peptides. Involved in the intramembrane cleavage of the integral membrane protein PSEN1. Cleaves the integral membrane protein XBP1 isoform 1 in a DERL1/RNF139-dependent manner. May play a role in graft rejection. The sequence is that of Signal peptide peptidase from Mus musculus (Mouse).